The sequence spans 245 residues: 1-(5-phosphoribosyl)-5-[(5-phosphoribosylamino)methylideneamino] imidazole-4-carboxamide isomerase (245 aa).

Residue D8 is the Proton acceptor of the active site. The active-site Proton donor is D130.

The protein belongs to the HisA/HisF family.

Its subcellular location is the cytoplasm. The enzyme catalyses 1-(5-phospho-beta-D-ribosyl)-5-[(5-phospho-beta-D-ribosylamino)methylideneamino]imidazole-4-carboxamide = 5-[(5-phospho-1-deoxy-D-ribulos-1-ylimino)methylamino]-1-(5-phospho-beta-D-ribosyl)imidazole-4-carboxamide. It functions in the pathway amino-acid biosynthesis; L-histidine biosynthesis; L-histidine from 5-phospho-alpha-D-ribose 1-diphosphate: step 4/9. The sequence is that of 1-(5-phosphoribosyl)-5-[(5-phosphoribosylamino)methylideneamino] imidazole-4-carboxamide isomerase from Ectopseudomonas mendocina (strain ymp) (Pseudomonas mendocina).